The sequence spans 95 residues: uncharacterized protein (95 aa).

Residues 60–89 adopt a coiled-coil conformation; sequence VKNMINRIVEELDKRIDEIKEGLNELEKSG.

This is an uncharacterized protein from Sulfolobus islandicus filamentous virus (isolate Iceland/Hveragerdi) (SIFV).